Consider the following 342-residue polypeptide: Cathepsin B-like cysteine proteinase 1 (342 aa).

An N-terminal signal peptide occupies residues 1-18; sequence MKYLVLALCTYLCSQTGA. Residues 19-86 constitute a propeptide, activation peptide; it reads DENAAQGIPL…VKEDPDPEVD (68 aa). An N-linked (GlcNAc...) asparagine glycan is attached at Asn-99. Disulfide bonds link Cys-100–Cys-128, Cys-111–Cys-156, Cys-147–Cys-214, Cys-148–Cys-152, Cys-185–Cys-218, and Cys-193–Cys-205. Residue Cys-114 is part of the active site. Asn-138 is a glycosylation site (N-linked (GlcNAc...) asparagine). A glycan (N-linked (GlcNAc...) asparagine) is linked at Asn-198. Residue His-285 is part of the active site. Asn-296 carries N-linked (GlcNAc...) asparagine glycosylation. The active site involves Asn-305.

This sequence belongs to the peptidase C1 family.

Expression of the protease correlates with blood-feeding and suggests a role for the protease in blood digestion. The chain is Cathepsin B-like cysteine proteinase 1 (AC-1) from Haemonchus contortus (Barber pole worm).